Reading from the N-terminus, the 118-residue chain is MRHCAFLFRLFLIGYSCSVYFSACTQASSLKEPADELPRAEQWDSDGKRILQADDPEHIPTEERGITQNLSPAVESVGKVKASKMAVPKSVISKLNPVNWVKGTWAALKKGFKALQLG.

Residues 1 to 18 (MRHCAFLFRLFLIGYSCS) form the signal peptide. Positions 35–65 (DELPRAEQWDSDGKRILQADDPEHIPTEERG) are enriched in basic and acidic residues. Positions 35 to 66 (DELPRAEQWDSDGKRILQADDPEHIPTEERGI) are disordered. Positions 49–64 (RILQADDPEHIPTEER) match the RxLR-dEER motif.

This sequence belongs to the RxLR effector family.

It is found in the secreted. The protein resides in the host cell membrane. Secreted effector that completely suppresses the host cell death induced by cell death-inducing proteins. The protein is Secreted RxLR effector protein 143 of Plasmopara viticola (Downy mildew of grapevine).